A 450-amino-acid chain; its full sequence is Phosphoglucosamine mutase (450 aa).

Ser102 serves as the catalytic Phosphoserine intermediate. The Mg(2+) site is built by Ser102, Asp242, Asp244, and Asp246. The residue at position 102 (Ser102) is a Phosphoserine.

It belongs to the phosphohexose mutase family. The cofactor is Mg(2+). Activated by phosphorylation.

It catalyses the reaction alpha-D-glucosamine 1-phosphate = D-glucosamine 6-phosphate. Functionally, catalyzes the conversion of glucosamine-6-phosphate to glucosamine-1-phosphate. The chain is Phosphoglucosamine mutase from Lachnospira eligens (strain ATCC 27750 / DSM 3376 / VPI C15-48 / C15-B4) (Eubacterium eligens).